Reading from the N-terminus, the 265-residue chain is Beta-lactamase SHV-4 (265 aa).

Ser45 acts as the Acyl-ester intermediate in catalysis. Cys52 and Cys98 are oxidised to a cystine. Glu143 acts as the Proton acceptor in catalysis. 209-211 (KTG) is a binding site for substrate.

Belongs to the class-A beta-lactamase family.

It catalyses the reaction a beta-lactam + H2O = a substituted beta-amino acid. SHV enzymes hydrolyze broad spectrum cephalosporins notably cefotaxime and ceftazidime. SHV-4 causes particularly high levels of resistance to aztreonam and ceftazidime. The polypeptide is Beta-lactamase SHV-4 (bla) (Klebsiella pneumoniae).